Here is a 132-residue protein sequence, read N- to C-terminus: Small ribosomal subunit protein uS8 (132 aa).

Belongs to the universal ribosomal protein uS8 family. As to quaternary structure, part of the 30S ribosomal subunit. Contacts proteins S5 and S12.

Functionally, one of the primary rRNA binding proteins, it binds directly to 16S rRNA central domain where it helps coordinate assembly of the platform of the 30S subunit. This is Small ribosomal subunit protein uS8 from Caldicellulosiruptor bescii (strain ATCC BAA-1888 / DSM 6725 / KCTC 15123 / Z-1320) (Anaerocellum thermophilum).